We begin with the raw amino-acid sequence, 229 residues long: Large ribosomal subunit protein uL1 (229 aa).

This sequence belongs to the universal ribosomal protein uL1 family. In terms of assembly, part of the 50S ribosomal subunit.

In terms of biological role, binds directly to 23S rRNA. The L1 stalk is quite mobile in the ribosome, and is involved in E site tRNA release. Protein L1 is also a translational repressor protein, it controls the translation of the L11 operon by binding to its mRNA. This chain is Large ribosomal subunit protein uL1, found in Caulobacter vibrioides (strain ATCC 19089 / CIP 103742 / CB 15) (Caulobacter crescentus).